Here is a 161-residue protein sequence, read N- to C-terminus: N5-carboxyaminoimidazole ribonucleotide mutase (161 aa).

Ser-9, Asp-12, and Arg-39 together coordinate substrate.

This sequence belongs to the AIR carboxylase family. Class I subfamily.

It carries out the reaction 5-carboxyamino-1-(5-phospho-D-ribosyl)imidazole + H(+) = 5-amino-1-(5-phospho-D-ribosyl)imidazole-4-carboxylate. The protein operates within purine metabolism; IMP biosynthesis via de novo pathway; 5-amino-1-(5-phospho-D-ribosyl)imidazole-4-carboxylate from 5-amino-1-(5-phospho-D-ribosyl)imidazole (N5-CAIR route): step 2/2. In terms of biological role, catalyzes the conversion of N5-carboxyaminoimidazole ribonucleotide (N5-CAIR) to 4-carboxy-5-aminoimidazole ribonucleotide (CAIR). This Vibrio parahaemolyticus serotype O3:K6 (strain RIMD 2210633) protein is N5-carboxyaminoimidazole ribonucleotide mutase.